A 227-amino-acid polypeptide reads, in one-letter code: Urease accessory protein UreF (227 aa).

The protein belongs to the UreF family. As to quaternary structure, ureD, UreF and UreG form a complex that acts as a GTP-hydrolysis-dependent molecular chaperone, activating the urease apoprotein by helping to assemble the nickel containing metallocenter of UreC. The UreE protein probably delivers the nickel.

The protein localises to the cytoplasm. Functionally, required for maturation of urease via the functional incorporation of the urease nickel metallocenter. This is Urease accessory protein UreF from Methylobacillus flagellatus (strain ATCC 51484 / DSM 6875 / VKM B-1610 / KT).